We begin with the raw amino-acid sequence, 238 residues long: Probable transcriptional regulatory protein CHU_3516 (238 aa).

It belongs to the TACO1 family.

Its subcellular location is the cytoplasm. The protein is Probable transcriptional regulatory protein CHU_3516 of Cytophaga hutchinsonii (strain ATCC 33406 / DSM 1761 / CIP 103989 / NBRC 15051 / NCIMB 9469 / D465).